A 746-amino-acid polypeptide reads, in one-letter code: Double-stranded RNA-specific editase B2 (746 aa).

2 disordered regions span residues 1-36 (MASV…KDKV) and 50-105 (SPGT…PLEE). The span at 20–34 (CKSKRRRRRRSKRKD) shows a compositional bias: basic residues. Positions 23–35 (KRRRRRRSKRKDK) are R-domain (ssRNA-binding). DRBM domains are found at residues 126-192 (TPKN…SFVQ) and 284-348 (NPVV…ALFD). The 328-residue stretch at 415 to 742 (VLSSGTKCIS…VRKPPEQDQF (328 aa)) folds into the A to I editase domain. H439 serves as a coordination point for Zn(2+). The Proton donor role is filled by E441. The Zn(2+) site is built by C497 and C562.

As to expression, brain specific.

Its subcellular location is the nucleus. Its function is as follows. Lacks editing activity. It prevents the binding of other ADAR enzymes to targets in vitro, and decreases the efficiency of these enzymes. Capable of binding to dsRNA but also to ssRNA. The protein is Double-stranded RNA-specific editase B2 (Adarb2) of Rattus norvegicus (Rat).